The chain runs to 882 residues: DNA mismatch repair protein MutS (882 aa).

G640 to S647 is a binding site for ATP.

It belongs to the DNA mismatch repair MutS family.

Its function is as follows. This protein is involved in the repair of mismatches in DNA. It is possible that it carries out the mismatch recognition step. This protein has a weak ATPase activity. This is DNA mismatch repair protein MutS from Albidiferax ferrireducens (strain ATCC BAA-621 / DSM 15236 / T118) (Rhodoferax ferrireducens).